We begin with the raw amino-acid sequence, 333 residues long: Pantothenate synthetase (333 aa).

Position 27-34 (27-34 (MGALHEGH)) interacts with ATP. The active-site Proton donor is the H34. Residue Q61 coordinates (R)-pantoate. Q61 contacts beta-alanine. 148–151 (GQKD) contributes to the ATP binding site. Q154 contacts (R)-pantoate. Residues V177 and 185 to 188 (LSSR) each bind ATP.

It belongs to the pantothenate synthetase family. Homodimer.

The protein localises to the cytoplasm. The catalysed reaction is (R)-pantoate + beta-alanine + ATP = (R)-pantothenate + AMP + diphosphate + H(+). The protein operates within cofactor biosynthesis; (R)-pantothenate biosynthesis; (R)-pantothenate from (R)-pantoate and beta-alanine: step 1/1. Its function is as follows. Catalyzes the condensation of pantoate with beta-alanine in an ATP-dependent reaction via a pantoyl-adenylate intermediate. This chain is Pantothenate synthetase, found in Streptomyces avermitilis (strain ATCC 31267 / DSM 46492 / JCM 5070 / NBRC 14893 / NCIMB 12804 / NRRL 8165 / MA-4680).